Reading from the N-terminus, the 787-residue chain is Protein translocase subunit SecA 2 (787 aa).

ATP-binding positions include glutamine 86, 104–108 (GEGKT), and aspartate 493.

It belongs to the SecA family. In terms of assembly, monomer and homodimer. Part of the essential Sec protein translocation apparatus which comprises SecA, SecYEG and auxiliary proteins SecDF. Other proteins may also be involved.

It is found in the cell membrane. The protein resides in the cytoplasm. The catalysed reaction is ATP + H2O + cellular proteinSide 1 = ADP + phosphate + cellular proteinSide 2.. Its function is as follows. Part of the Sec protein translocase complex. Interacts with the SecYEG preprotein conducting channel. Has a central role in coupling the hydrolysis of ATP to the transfer of proteins into and across the cell membrane, serving as an ATP-driven molecular motor driving the stepwise translocation of polypeptide chains across the membrane. In Bacillus thuringiensis subsp. konkukian (strain 97-27), this protein is Protein translocase subunit SecA 2.